Consider the following 531-residue polypeptide: Beta-hexosaminidase subunit beta (531 aa).

The first 24 residues, 1–24 (MRHRGLGLAALLALLAAVAPRSSA), serve as a signal peptide directing secretion. N50 is a glycosylation site (N-linked (GlcNAc...) asparagine). A disulfide bond links C65 and C111. 3 N-linked (GlcNAc...) asparagine glycosylation sites follow: N116, N164, and N301. Cystine bridges form between C283/C334 and C508/C525. The active-site Proton donor is the E329.

Belongs to the glycosyl hydrolase 20 family. There are 3 forms of beta-hexosaminidase: hexosaminidase A is a heterodimer composed of one subunit alpha and one subunit beta (chain A and B); hexosaminidase B is a homodimer of two beta subunits (two chains A and B); hexosaminidase S is a homodimer of two alpha subunits. The composition of the dimer (isozyme A versus isozyme S) has a significant effect on the substrate specificity of the alpha subunit active site.

The protein resides in the lysosome. Its subcellular location is the cytoplasmic vesicle. It localises to the secretory vesicle. It is found in the cortical granule. It carries out the reaction Hydrolysis of terminal non-reducing N-acetyl-D-hexosamine residues in N-acetyl-beta-D-hexosaminides.. The enzyme catalyses N-acetyl-beta-D-galactosaminyl-(1-&gt;4)-beta-D-3-sulfogalactosyl-(1-&gt;4)-beta-D-glucosyl-(1&lt;-&gt;1')-ceramide + H2O = a beta-D-3-sulfogalactosyl-(1-&gt;4)-beta-D-glucosyl-(1&lt;-&gt;1')-ceramide + N-acetyl-beta-D-galactosamine. The catalysed reaction is a ganglioside GM2 (d18:1(4E)) + H2O = a ganglioside GM3 (d18:1(4E)) + N-acetyl-beta-D-galactosamine. It catalyses the reaction a ganglioside GM2 + H2O = a ganglioside GM3 + N-acetyl-beta-D-galactosamine. It carries out the reaction beta-D-GalNAc-(1-&gt;4)-alpha-L-IdoA-(1-&gt;3)-beta-D-GalNAc-4-sulfate-(1-&gt;4)-alpha-L-IdoA-(1-&gt;3)-D-GalNAc-4-sulfate + H2O = alpha-L-IdoA-(1-&gt;3)-beta-D-GalNAc-4-sulfate-(1-&gt;4)-alpha-L-IdoA-(1-&gt;3)-D-GalNAc-4-sulfate + N-acetyl-D-galactosamine. The enzyme catalyses N-acetyl-beta-D-6-sulfogalactosaminyl-(1-&gt;4)-alpha-L-iduronyl-(1-&gt;3)-N-acetyl-D-6-sulfogalactosamine + H2O = alpha-L-iduronyl-(1-&gt;3)-N-acetyl-D-6-sulfogalactosamine + N-acetyl-D-6-sulfogalactosamine. Addition of GM2A stimulates the hydrolysis of sulfated glycosphingolipid SM2 and the ganglioside GM2. Its function is as follows. Hydrolyzes the non-reducing end N-acetyl-D-hexosamine and/or sulfated N-acetyl-D-hexosamine of glycoconjugates, such as the oligosaccharide moieties from proteins and neutral glycolipids, or from certain mucopolysaccharides. The isozyme B does not hydrolyze each of these substrates, however hydrolyzes efficiently neutral oligosaccharide. Only the isozyme A is responsible for the degradation of GM2 gangliosides in the presence of GM2A. During fertilization is responsible, at least in part, for the zona block to polyspermy. Present in the cortical granules of non-activated oocytes, is exocytosed during the cortical reaction in response to oocyte activation and inactivates the sperm galactosyltransferase-binding site, accounting for the block in sperm binding to the zona pellucida. In Felis catus (Cat), this protein is Beta-hexosaminidase subunit beta.